A 313-amino-acid chain; its full sequence is uncharacterized protein (313 aa).

Transmembrane regions (helical) follow at residues 42–64 (LVVL…LFLT) and 74–96 (VRAY…TLYV).

The protein resides in the cell membrane. This is an uncharacterized protein from Treponema pallidum (strain Nichols).